We begin with the raw amino-acid sequence, 76 residues long: ATP synthase subunit c (76 aa).

A run of 2 helical transmembrane segments spans residues 8-28 (LLAAGLAMGLGAIGPGIGVGI) and 55-75 (VAFAESIAIFALVISIVLIFV).

This sequence belongs to the ATPase C chain family. As to quaternary structure, F-type ATPases have 2 components, F(1) - the catalytic core - and F(0) - the membrane proton channel. F(1) has five subunits: alpha(3), beta(3), gamma(1), delta(1), epsilon(1). F(0) has three main subunits: a(1), b(2) and c(10-14). The alpha and beta chains form an alternating ring which encloses part of the gamma chain. F(1) is attached to F(0) by a central stalk formed by the gamma and epsilon chains, while a peripheral stalk is formed by the delta and b chains.

It localises to the cell membrane. In terms of biological role, f(1)F(0) ATP synthase produces ATP from ADP in the presence of a proton or sodium gradient. F-type ATPases consist of two structural domains, F(1) containing the extramembraneous catalytic core and F(0) containing the membrane proton channel, linked together by a central stalk and a peripheral stalk. During catalysis, ATP synthesis in the catalytic domain of F(1) is coupled via a rotary mechanism of the central stalk subunits to proton translocation. Its function is as follows. Key component of the F(0) channel; it plays a direct role in translocation across the membrane. A homomeric c-ring of between 10-14 subunits forms the central stalk rotor element with the F(1) delta and epsilon subunits. The polypeptide is ATP synthase subunit c (Dehalococcoides mccartyi (strain ATCC BAA-2266 / KCTC 15142 / 195) (Dehalococcoides ethenogenes (strain 195))).